A 313-amino-acid chain; its full sequence is Myeloma-overexpressed gene protein (313 aa).

The tract at residues 107 to 129 (ERNKGDKGAQTGAGLSQEAEDVD) is disordered.

The polypeptide is Myeloma-overexpressed gene protein (MYEOV) (Homo sapiens (Human)).